Reading from the N-terminus, the 144-residue chain is Putative pre-16S rRNA nuclease (144 aa).

It belongs to the YqgF nuclease family.

Its subcellular location is the cytoplasm. In terms of biological role, could be a nuclease involved in processing of the 5'-end of pre-16S rRNA. This chain is Putative pre-16S rRNA nuclease, found in Blochmanniella pennsylvanica (strain BPEN).